A 282-amino-acid polypeptide reads, in one-letter code: MYNYTIYHPVKISGRGLYTGINSTITIYPELPHVGIYFLRTDLTDYPIVPIIPSTLLVLNSKLSTVLGFHDDYSIMLIEHLMSAISLSQLTDLKIILEGPEIPILDGSSIIWLKLLQQAKIYITSLSNCIIFKSSCTFFIQTKDTFIISFPYTSLAINTGIDFKNCLAIKSQWITILDLLINRFELVGIASSRTFGDFNQINILINEGFFQGANLYNALAFQLGNWCNGPLRFICEPAKHKVLDLIGDLRLLGVYNMFFLIGYKTNHFVNSQLVQFFKKLDK.

His80, His240, and Asp244 together coordinate Zn(2+). The active-site Proton donor is His267.

It belongs to the LpxC family. The cofactor is Zn(2+).

Its subcellular location is the plastid. The protein localises to the chloroplast. The catalysed reaction is a UDP-3-O-[(3R)-3-hydroxyacyl]-N-acetyl-alpha-D-glucosamine + H2O = a UDP-3-O-[(3R)-3-hydroxyacyl]-alpha-D-glucosamine + acetate. Its pathway is glycolipid biosynthesis; lipid IV(A) biosynthesis; lipid IV(A) from (3R)-3-hydroxytetradecanoyl-[acyl-carrier-protein] and UDP-N-acetyl-alpha-D-glucosamine: step 2/6. Its function is as follows. Catalyzes the hydrolysis of UDP-3-O-myristoyl-N-acetylglucosamine to form UDP-3-O-myristoylglucosamine and acetate. Involved in the biosynthesis of lipid A, a phosphorylated glycolipid that in bacteria anchors the lipopolysaccharide to the outer membrane of the cell. The target for the lipopolysaccharides produced in the chloroplast could either be the cell envelope of the eukaryote or the plastid membrane. In Cyanidium caldarium (Red alga), this protein is UDP-3-O-acyl-N-acetylglucosamine deacetylase.